Here is a 96-residue protein sequence, read N- to C-terminus: MPAIEVGRICVKVKGREAGSKCVIVDIIDDNFVLVTGPKDISGVKRRRVNILHLEPTDKKIDIQKGASDEEVRKKIEEAGLTEYMKERIKIKIPTL.

Belongs to the eukaryotic ribosomal protein eL14 family.

This chain is Large ribosomal subunit protein eL14, found in Saccharolobus islandicus (strain Y.N.15.51 / Yellowstone #2) (Sulfolobus islandicus).